A 708-amino-acid chain; its full sequence is Chaperonin-containing T-complex member BBS12 (708 aa).

The protein belongs to the TCP-1 chaperonin family. BBS12 subfamily. In terms of assembly, component of the chaperonin-containing T-complex (TRiC), a heterooligomeric complex of about 850 to 900 kDa that forms two stacked rings, 12 to 16 nm in diameter. Interacts with MKKS.

The protein localises to the cell projection. The protein resides in the cilium. In terms of biological role, component of the chaperonin-containing T-complex (TRiC), a molecular chaperone complex that assists the folding of proteins upon ATP hydrolysis. As part of the TRiC complex may play a role in the assembly of BBSome, a complex involved in ciliogenesis regulating transports vesicles to the cilia. Involved in adipogenic differentiation. This chain is Chaperonin-containing T-complex member BBS12 (Bbs12), found in Mus musculus (Mouse).